Here is a 122-residue protein sequence, read N- to C-terminus: Large ribosomal subunit protein uL24 (122 aa).

The protein belongs to the universal ribosomal protein uL24 family. In terms of assembly, part of the 50S ribosomal subunit.

In terms of biological role, one of two assembly initiator proteins, it binds directly to the 5'-end of the 23S rRNA, where it nucleates assembly of the 50S subunit. Functionally, located at the polypeptide exit tunnel on the outside of the subunit. In Pyrobaculum arsenaticum (strain DSM 13514 / JCM 11321 / PZ6), this protein is Large ribosomal subunit protein uL24.